We begin with the raw amino-acid sequence, 502 residues long: MLLRSSGKLNVGTKKEDGESTAPTPRPKILRCKCHHHCPEDSVNNICSTDGYCFTMIEEDDSGMPVVTSGCLGLEGSDFQCRDTPIPHQRRSIECCTERNECNKDLHPTLPPLKDRDFVDGPIHHKALLISVTVCSLLLVLIILFCYFRYKRQEARPRYSIGLEQDETYIPPGESLRDLIEQSQSSGSGSGLPLLVQRTIAKQIQMVKQIGKGRYGEVWMGKWRGEKVAVKVFFTTEEASWFRETEIYQTVLMRHENILGFIAADIKGTGSWTQLYLITDYHENGSLYDYLKSTTLDAKSMLKLAYSSVSGLCHLHTEIFSTQGKPAIAHRDLKSKNILVKKNGTCCIADLGLAVKFISDTNEVDIPPNTRVGTKRYMPPEVLDESLNRNHFQSYIMADMYSFGLILWEIARRCVSGGIVEEYQLPYHDLVPSDPSYEDMREIVCMKKLRPSFPNRWSSDECLRQMGKLMTECWAQNPASRLTALRVKKTLAKMSESQDIKL.

The N-terminal stretch at methionine 1–threonine 13 is a signal peptide. Residues methionine 1–threonine 24 are disordered. At lysine 14–lysine 126 the chain is on the extracellular side. Cystine bridges form between cysteine 32/cysteine 53, cysteine 34/cysteine 38, cysteine 47/cysteine 71, cysteine 81/cysteine 95, and cysteine 96/cysteine 102. Residues alanine 127–phenylalanine 148 form a helical membrane-spanning segment. At arginine 149–leucine 502 the chain is on the cytoplasmic side. The GS domain occupies glutamate 174–glutamine 203. In terms of domain architecture, Protein kinase spans isoleucine 204–methionine 494. ATP contacts are provided by residues isoleucine 210 to valine 218 and lysine 231. Catalysis depends on aspartate 332, which acts as the Proton acceptor.

The protein belongs to the protein kinase superfamily. TKL Ser/Thr protein kinase family. TGFB receptor subfamily. Interacts with high affinity with GDF5; positively regulates chondrocyte differentiation. Interacts with SCUBE3. Interacts with TSC22D1/TSC-22. Interacts with TGFBR3. Requires Mg(2+) as cofactor. Mn(2+) is required as a cofactor. Post-translationally, autophosphorylated.

The protein localises to the cell membrane. The catalysed reaction is L-threonyl-[receptor-protein] + ATP = O-phospho-L-threonyl-[receptor-protein] + ADP + H(+). It carries out the reaction L-seryl-[receptor-protein] + ATP = O-phospho-L-seryl-[receptor-protein] + ADP + H(+). Its function is as follows. On ligand binding, forms a receptor complex consisting of two type II and two type I transmembrane serine/threonine kinases. Type II receptors phosphorylate and activate type I receptors which autophosphorylate, then bind and activate SMAD transcriptional regulators. Receptor for BMP7/OP-1. Receptor for GDF5. Positively regulates chondrocyte differentiation through GDF5 interaction. This is Bone morphogenetic protein receptor type-1B (Bmpr1b) from Mus musculus (Mouse).